A 512-amino-acid polypeptide reads, in one-letter code: Probable cobyric acid synthase (512 aa).

In terms of domain architecture, GATase cobBQ-type spans 275-460 (SVTVAVPHLP…LHGLFGNDAA (186 aa)). Cys-353 acts as the Nucleophile in catalysis. Residue His-452 is part of the active site.

Belongs to the CobB/CobQ family. CobQ subfamily.

Its pathway is cofactor biosynthesis; adenosylcobalamin biosynthesis. In terms of biological role, catalyzes amidations at positions B, D, E, and G on adenosylcobyrinic A,C-diamide. NH(2) groups are provided by glutamine, and one molecule of ATP is hydrogenolyzed for each amidation. This is Probable cobyric acid synthase from Halobacterium salinarum (strain ATCC 29341 / DSM 671 / R1).